The sequence spans 240 residues: UDP-2,3-diacylglucosamine hydrolase (240 aa).

Mn(2+) is bound by residues aspartate 8, histidine 10, aspartate 41, asparagine 79, and histidine 114. 79–80 lines the substrate pocket; the sequence is NR. Aspartate 122, serine 160, asparagine 164, lysine 167, and histidine 195 together coordinate substrate. Mn(2+) contacts are provided by histidine 195 and histidine 197.

This sequence belongs to the LpxH family. The cofactor is Mn(2+).

It is found in the cell inner membrane. The catalysed reaction is UDP-2-N,3-O-bis[(3R)-3-hydroxytetradecanoyl]-alpha-D-glucosamine + H2O = 2-N,3-O-bis[(3R)-3-hydroxytetradecanoyl]-alpha-D-glucosaminyl 1-phosphate + UMP + 2 H(+). It functions in the pathway glycolipid biosynthesis; lipid IV(A) biosynthesis; lipid IV(A) from (3R)-3-hydroxytetradecanoyl-[acyl-carrier-protein] and UDP-N-acetyl-alpha-D-glucosamine: step 4/6. In terms of biological role, hydrolyzes the pyrophosphate bond of UDP-2,3-diacylglucosamine to yield 2,3-diacylglucosamine 1-phosphate (lipid X) and UMP by catalyzing the attack of water at the alpha-P atom. Involved in the biosynthesis of lipid A, a phosphorylated glycolipid that anchors the lipopolysaccharide to the outer membrane of the cell. The protein is UDP-2,3-diacylglucosamine hydrolase of Photorhabdus laumondii subsp. laumondii (strain DSM 15139 / CIP 105565 / TT01) (Photorhabdus luminescens subsp. laumondii).